Here is a 33-residue protein sequence, read N- to C-terminus: Beta/kappa-theraphotoxin-Hlv1a (33 aa).

3 disulfide bridges follow: C2/C17, C9/C22, and C16/C29. I33 bears the Isoleucine amide mark.

The protein belongs to the neurotoxin 10 (Hwtx-1) family. 11 (haplotoxin-2) subfamily. Expressed by the venom gland.

Its subcellular location is the secreted. In terms of biological role, spider venom neurotoxin that blocks voltage-gated sodium channel Nav1.3/SCN3A in human (IC(50)=80 nM) and rat (IC(50)=160 nM). Partially inhibits human Kv11.1/KCNH2/ERG (25% at 175 uM). The chain is Beta/kappa-theraphotoxin-Hlv1a from Cyriopagopus lividus (Cobalt blue tarantula).